Reading from the N-terminus, the 639-residue chain is Actin assembly-inducing protein (639 aa).

Residues 1–29 (MGLNRFMRAMMVVFITANCITINPDIIFA) form the signal peptide. Disordered stretches follow at residues 36 to 71 (SSLN…SSRD), 132 to 212 (RRHP…QPFF), 285 to 308 (LGFN…TDEE), and 320 to 341 (LGFN…PPTE). The span at 41–52 (DEWEEEKTEEQP) shows a compositional bias: acidic residues. Residues 62–71 (ETAREVSSRD) show a composition bias toward basic and acidic residues. Over residues 190-210 (DSSMQSADESSPQPLKANQQP) the composition is skewed to polar residues. 2 repeat units span residues 264-298 (DFPP…PSSF) and 299-333 (EFPP…PSSF). Residues 264-333 (DFPPPPTDEE…APATSEPSSF (70 aa)) form a 5 X approximate tandem repeats, Pro-rich region. The stretch at 334–378 (EFPPPPTEDELEIIRETASSLDSSFTRGDLASLRNAINRHSQNFS) is one 3; approximate repeat. The Cell attachment site signature appears at 360–362 (RGD). Disordered stretches follow at residues 372 to 459 (RHSQ…LSPK) and 474 to 610 (KKTP…EPGN). A 4; approximate repeat occupies 379–417 (DFPPIPTEEELNGRGGRPTSEEFSSLNSGDFTDDENSET). A compositionally biased stretch (acidic residues) spans 409 to 422 (FTDDENSETTEEEI). One copy of the 5; truncated repeat lies at 418-422 (TEEEI). Residues 423–433 (DRLADLRDRGT) show a composition bias toward basic and acidic residues. 2 stretches are compositionally biased toward low complexity: residues 450–459 (SSPVPSLSPK) and 490–509 (KKTT…TAPK). 2 stretches are compositionally biased toward basic and acidic residues: residues 553–572 (EATE…KMVE) and 588–609 (GIEE…EEPG). A helical transmembrane segment spans residues 613–633 (TLILAMLAIGVFSLGAFIKII).

It is found in the cell membrane. Functionally, virulence factor required for host cell microfilament interaction. It induces actin assembly around the bacteria to allow it to move within the cytoplasm. It is involved in the actin polymerization process. It seems to act as a nucleator that induces the reorganization of the actin cytoskeleton. The sequence is that of Actin assembly-inducing protein (actA) from Listeria monocytogenes serovar 1/2a (strain ATCC BAA-679 / EGD-e).